The primary structure comprises 257 residues: 3-methyl-2-oxobutanoate hydroxymethyltransferase (257 aa).

Residues Asp42 and Asp86 each coordinate Mg(2+). 3-methyl-2-oxobutanoate is bound by residues 42–43 (DS), Asp86, and Lys116. A Mg(2+)-binding site is contributed by Glu118. Residue Glu185 is the Proton acceptor of the active site.

It belongs to the PanB family. Homodecamer; pentamer of dimers. Mg(2+) serves as cofactor.

The protein resides in the cytoplasm. It catalyses the reaction 3-methyl-2-oxobutanoate + (6R)-5,10-methylene-5,6,7,8-tetrahydrofolate + H2O = 2-dehydropantoate + (6S)-5,6,7,8-tetrahydrofolate. It functions in the pathway cofactor biosynthesis; (R)-pantothenate biosynthesis; (R)-pantoate from 3-methyl-2-oxobutanoate: step 1/2. Its function is as follows. Catalyzes the reversible reaction in which hydroxymethyl group from 5,10-methylenetetrahydrofolate is transferred onto alpha-ketoisovalerate to form ketopantoate. This Prochlorococcus marinus (strain MIT 9312) protein is 3-methyl-2-oxobutanoate hydroxymethyltransferase.